Here is a 221-residue protein sequence, read N- to C-terminus: Ras-related protein RABA5a (221 aa).

A GTP-binding site is contributed by 21–28 (GDSAVGKS). An Effector region motif is present at residues 43 to 51 (SKSTIGVEF). Residues 69–73 (DTAGQ), 127–130 (NKSD), and 157–158 (SA) contribute to the GTP site. 2 S-geranylgeranyl cysteine lipidation sites follow: Cys218 and Cys219.

The protein belongs to the small GTPase superfamily. Rab family.

It localises to the cell membrane. Intracellular vesicle trafficking and protein transport. The protein is Ras-related protein RABA5a (RABA5A) of Arabidopsis thaliana (Mouse-ear cress).